Consider the following 68-residue polypeptide: MMFRLTSVSCFLLVIVCLNLFQVVLTRRCFPPGTFCSRYLPCCSGRCCSGWCTRRCFPRFGKRATFQE.

Residues 1 to 26 (MMFRLTSVSCFLLVIVCLNLFQVVLT) form the signal peptide. 4 cysteine pairs are disulfide-bonded: C29/C43, C36/C48, C42/C52, and C47/C56. Position 60 is a phenylalanine amide (F60). A propeptide spanning residues 64–68 (ATFQE) is cleaved from the precursor.

Belongs to the conotoxin I2 superfamily. As to expression, expressed by the venom duct.

It is found in the secreted. The protein is Conotoxin Eb11.7 of Conus eburneus (Ivory cone).